The primary structure comprises 227 residues: Nodulation protein W (227 aa).

The region spanning 21–135 (IVFVVEDDIS…ELLDAVVAAT (115 aa)) is the Response regulatory domain. Position 70 is a 4-aspartylphosphate (D70). The HTH luxR-type domain occupies 151 to 216 (LKSLFETLSP…DLIRMSETLG (66 aa)). Positions 175–194 (NKQVAAELGLAEITVKIYRG) form a DNA-binding region, H-T-H motif.

Post-translationally, phosphorylated by NodV.

Its subcellular location is the cytoplasm. In terms of biological role, member of the two-component regulatory system NodV/NodW probably involved in the regulation of the transcription of genes involved in the nodulation process. The polypeptide is Nodulation protein W (nodW) (Bradyrhizobium diazoefficiens (strain JCM 10833 / BCRC 13528 / IAM 13628 / NBRC 14792 / USDA 110)).